The chain runs to 556 residues: Urocanate hydratase (556 aa).

NAD(+) contacts are provided by residues 52 to 53 (GG), Gln130, 176 to 178 (GMG), Glu196, Arg201, 242 to 243 (NA), 263 to 267 (QTSAH), 273 to 274 (YL), and Tyr322. Cys410 is a catalytic residue. Gly492 contributes to the NAD(+) binding site.

Belongs to the urocanase family. NAD(+) serves as cofactor.

The protein resides in the cytoplasm. It carries out the reaction 4-imidazolone-5-propanoate = trans-urocanate + H2O. It participates in amino-acid degradation; L-histidine degradation into L-glutamate; N-formimidoyl-L-glutamate from L-histidine: step 2/3. Functionally, catalyzes the conversion of urocanate to 4-imidazolone-5-propionate. The sequence is that of Urocanate hydratase from Bradyrhizobium sp. (strain ORS 278).